A 101-amino-acid chain; its full sequence is Putative pterin-4-alpha-carbinolamine dehydratase (101 aa).

Belongs to the pterin-4-alpha-carbinolamine dehydratase family.

The catalysed reaction is (4aS,6R)-4a-hydroxy-L-erythro-5,6,7,8-tetrahydrobiopterin = (6R)-L-erythro-6,7-dihydrobiopterin + H2O. In Rhizobium leguminosarum bv. trifolii (strain WSM2304), this protein is Putative pterin-4-alpha-carbinolamine dehydratase.